Here is a 666-residue protein sequence, read N- to C-terminus: Endogenous retrovirus group K member 24 Gag polyprotein (666 aa).

The N-myristoyl glycine moiety is linked to residue G2. The segment at 165–264 is disordered; the sequence is GKGPELVGPS…APPSRQGSEL (100 aa). Pro residues predominate over residues 232-247; that stretch reads GMPPAPQGRAPYPQPP. 2 CCHC-type zinc fingers span residues 544–561 and 580–597; these read GKCY…NCPV and DLCP…QCRS. The interval 598 to 641 is disordered; sequence KFDKNGQPLSGNEQRGQPQAPQQTGAFPIQPFVPQGFQGQQPPL. Polar residues predominate over residues 604–622; it reads QPLSGNEQRGQPQAPQQTG. Residues 624–640 are compositionally biased toward low complexity; sequence FPIQPFVPQGFQGQQPP.

The protein belongs to the beta type-B retroviral Gag protein family. HERV class-II K(HML-2) gag subfamily. Myristoylation is essential for retroviral assembly. Alteration of the glycine residue leads to a block in the budding of particles and an accumulation of Gag inside the cell. Post-translationally, specific enzymatic cleavages may yield mature proteins.

It is found in the cell membrane. In terms of biological role, the products of the Gag polyproteins of infectious retroviruses perform highly complex orchestrated tasks during the assembly, budding, maturation, and infection stages of the viral replication cycle. During viral assembly, the proteins form membrane associations and self-associations that ultimately result in budding of an immature virion from the infected cell. Gag precursors also function during viral assembly to selectively bind and package two plus strands of genomic RNA. Endogenous Gag proteins may have kept, lost or modified their original function during evolution. The protein is Endogenous retrovirus group K member 24 Gag polyprotein (ERVK-24) of Homo sapiens (Human).